A 444-amino-acid polypeptide reads, in one-letter code: UDP-N-acetylglucosamine 1-carboxyvinyltransferase (444 aa).

22–23 (KN) contributes to the phosphoenolpyruvate binding site. A UDP-N-acetyl-alpha-D-glucosamine-binding site is contributed by R94. D119 (proton donor) is an active-site residue. Positions 309 and 331 each coordinate UDP-N-acetyl-alpha-D-glucosamine.

This sequence belongs to the EPSP synthase family. MurA subfamily.

The protein resides in the cytoplasm. The catalysed reaction is phosphoenolpyruvate + UDP-N-acetyl-alpha-D-glucosamine = UDP-N-acetyl-3-O-(1-carboxyvinyl)-alpha-D-glucosamine + phosphate. It participates in cell wall biogenesis; peptidoglycan biosynthesis. Functionally, cell wall formation. Adds enolpyruvyl to UDP-N-acetylglucosamine. The polypeptide is UDP-N-acetylglucosamine 1-carboxyvinyltransferase (Chlamydia trachomatis serovar A (strain ATCC VR-571B / DSM 19440 / HAR-13)).